The sequence spans 413 residues: Probable aminotransferase sirI (413 aa).

The residue at position 255 (K255) is an N6-(pyridoxal phosphate)lysine.

This sequence belongs to the class-I pyridoxal-phosphate-dependent aminotransferase family. The cofactor is pyridoxal 5'-phosphate.

Its pathway is mycotoxin biosynthesis. Probable aminotransferase; part of the gene cluster that mediates the biosynthesis of sirodesmin PL, an epipolythiodioxopiperazine (ETP) characterized by a disulfide bridged cyclic dipeptide and that acts as a phytotoxin which is involved in the blackleg didease of canola. SirD catalyzes the O-prenylation of L-tyrosine (L-Tyr) in the presence of dimethylallyl diphosphate (DMAPP) to yield 4-O-dimethylallyl-L-Tyr, and therefore represents probably the first pathway-specific enzyme in the biosynthesis of sirodesmin PL. 4-O-dimethylallyl-L-Tyr, then undergoes condensation with L-Ser in a reaction catalyzed by the non-ribosomal peptide synthase sirP to form the diketopiperazine (DKP) backbone. Further bishydroxylation of the DKP performed by the cytochrome P450 monooxygenase sirC leads to the production of the intermediate phomamide. This step is essential to form the reactive thiol group required for toxicity of sirodesmin PL. The next steps of sirodesmin biosynthesis are not well understood yet, but some predictions could be made from intermediate compounds identification. Phomamide is converted into phomalizarine via oxidation, probably by sirT. Further oxidation, methylation (by sirM or sirN) and reduction steps convert phomalizarine to deacetyl sirodesmin. Finally, acetyltransferase sirH probably acetylates deacetyl sirodesmin to produce sirodesmin PL. In Leptosphaeria maculans (Blackleg fungus), this protein is Probable aminotransferase sirI.